Consider the following 122-residue polypeptide: Acidic phospholipase A2 1 (122 aa).

Disulfide bonds link C26–C115, C28–C44, C43–C94, C49–C122, C50–C87, C57–C81, and C75–C85. 3 residues coordinate Ca(2+): Y27, G29, and G31. H47 is a catalytic residue. Residue D48 participates in Ca(2+) binding. D88 is a catalytic residue.

This sequence belongs to the phospholipase A2 family. Group II subfamily. D49 sub-subfamily. In terms of assembly, homodimer. It depends on Ca(2+) as a cofactor. Expressed by the venom gland.

The protein localises to the secreted. The catalysed reaction is a 1,2-diacyl-sn-glycero-3-phosphocholine + H2O = a 1-acyl-sn-glycero-3-phosphocholine + a fatty acid + H(+). PLA2 catalyzes the calcium-dependent hydrolysis of the 2-acyl groups in 3-sn-phosphoglycerides. The polypeptide is Acidic phospholipase A2 1 (Protobothrops mucrosquamatus (Taiwan habu)).